The sequence spans 399 residues: MRKKYFGFLILGVLLAGYIYVPLPDNVEEPWKIMLLNTFLKTSSYLALFGEILGLNHFMKSMALFSRIQGFPPTSDENIIVKDTTFNDIPVRIYVPQQKTKSLRRGLFYIHGGGWCFGSNDYYSYDLLSRWTAERLDAVVISTNYRLAPKYHFPVQFEDVYTALKWFLDPQNLESYGVDPGRIGISGDSAGGNLAAAVAQQLLEDPDVKIKLKVQTLIYPALQNFDFDLPSYRENAHYPVLSKSLMVRFWSEYFTTDRSLKKAMLSNQHIPLESSNLFKFVNWSSLLPEKFKKGHIYKTPTHGSSELAKKYPGILDVKASPLLADDSKLRGLPLTYVITCQYDVLRDDGLMYVTRLQKSGVQVIHNHVEGAFHGTLAFLFTKVGYRAANQYINWLHENL.

The Cytoplasmic segment spans residues 1–4; it reads MRKK. Residues 5 to 25 form a helical; Signal-anchor for type II membrane protein membrane-spanning segment; sequence YFGFLILGVLLAGYIYVPLPD. Residues 26-399 are Lumenal-facing; it reads NVEEPWKIML…QYINWLHENL (374 aa). Residues 111-113 carry the Involved in the stabilization of the negatively charged intermediate by the formation of the oxyanion hole motif; sequence HGG. A disulfide bridge connects residues Cys116 and Cys340. Residue Ser189 is part of the active site. The N-linked (GlcNAc...) asparagine glycan is linked to Asn282. Catalysis depends on residues Asp343 and His373.

Belongs to the 'GDXG' lipolytic enzyme family.

The protein localises to the endoplasmic reticulum membrane. Its subcellular location is the microsome membrane. It carries out the reaction a triacylglycerol + H2O = a diacylglycerol + a fatty acid + H(+). Its function is as follows. Displays cellular triglyceride lipase activity in liver, increases the levels of intracellular fatty acids derived from the hydrolysis of newly formed triglyceride stores and plays a role in very low-density lipoprotein assembly. Displays serine esterase activity in liver. Deacetylates a variety of arylacetamide substrates, including xenobiotic compounds and procarcinogens, converting them to the primary arylamide compounds and increasing their toxicity. The chain is Arylacetamide deacetylase (AADAC) from Bos taurus (Bovine).